The chain runs to 448 residues: tRNA-2-methylthio-N(6)-dimethylallyladenosine synthase (448 aa).

The MTTase N-terminal domain occupies 2–119 (KKLYIKTFGC…LSDLIAKRRE (118 aa)). Residues Cys-11, Cys-48, Cys-82, Cys-156, Cys-160, and Cys-163 each contribute to the [4Fe-4S] cluster site. The Radical SAM core domain maps to 142–377 (RQTRGSAYVS…LVESQANQIS (236 aa)). One can recognise a TRAM domain in the interval 378–444 (QKMLGNIERV…NYTLRGKLVE (67 aa)).

This sequence belongs to the methylthiotransferase family. MiaB subfamily. As to quaternary structure, monomer. [4Fe-4S] cluster serves as cofactor.

It localises to the cytoplasm. The catalysed reaction is N(6)-dimethylallyladenosine(37) in tRNA + (sulfur carrier)-SH + AH2 + 2 S-adenosyl-L-methionine = 2-methylsulfanyl-N(6)-dimethylallyladenosine(37) in tRNA + (sulfur carrier)-H + 5'-deoxyadenosine + L-methionine + A + S-adenosyl-L-homocysteine + 2 H(+). In terms of biological role, catalyzes the methylthiolation of N6-(dimethylallyl)adenosine (i(6)A), leading to the formation of 2-methylthio-N6-(dimethylallyl)adenosine (ms(2)i(6)A) at position 37 in tRNAs that read codons beginning with uridine. The polypeptide is tRNA-2-methylthio-N(6)-dimethylallyladenosine synthase (Polynucleobacter necessarius subsp. necessarius (strain STIR1)).